The primary structure comprises 1481 residues: Cystic fibrosis transmembrane conductance regulator (1481 aa).

Residues 1-77 (MQRSPLEKAS…KLINALRRCF (77 aa)) lie on the Cytoplasmic side of the membrane. The chain crosses the membrane as a helical span at residues 78–98 (FWRFTFYGILLYLGEVTKAVQ). Positions 81-365 (FTFYGILLYL…WAVQTWYDSL (285 aa)) constitute an ABC transmembrane type-1 1 domain. The Extracellular portion of the chain corresponds to 99–122 (PLLLGRIIASYDPDNKTERSIAIY). The helical transmembrane segment at 123-146 (LGIGLCLLFIVRTLLLHPAIFGLH) threads the bilayer. Residues 147-195 (HIGMQMRIAMFSLIYKKTLKLSSRVLDKISIGQLVSLLSNNLNKFDEGL) are Cytoplasmic-facing. The helical transmembrane segment at 196-216 (ALAHFVWIAPLQVALLMGLIW) threads the bilayer. Over 217–222 (ELLQAS) the chain is Extracellular. The chain crosses the membrane as a helical span at residues 223-243 (AFCGLGFLIVLALFQAGLGRM). The Cytoplasmic segment spans residues 244–298 (MMKYRDQRAGKINERLVITSEMIENIQSVKAYCWEEAMEKMIENLRQTELKLTRK). A helical transmembrane segment spans residues 299-319 (AAYVRYFNSSAFFFSGFFVVF). The Extracellular portion of the chain corresponds to 320-339 (LSVLPYALIKGIALRKIFTT). The helical transmembrane segment at 340–358 (ISFCIVLRMAVTRQFPWAV) threads the bilayer. The Cytoplasmic portion of the chain corresponds to 359–858 (QTWYDSLGAI…YLRYITLHKS (500 aa)). Residues Trp-401, Ser-434, 458 to 465 (GSTGAGKT), and Gln-493 contribute to the ATP site. The ABC transporter 1 domain occupies 423 to 646 (NGDDNLFFSN…RPDFSSKLMG (224 aa)). A lipid anchor (S-palmitoyl cysteine) is attached at Cys-524. Ser-549 and Ser-660 each carry phosphoserine. The segment at 654–831 (SSERRNSILT…EEINEEDLKE (178 aa)) is disordered R region. Phosphoserine; by PKA is present on Ser-670. Residue Ser-686 is modified to Phosphoserine. Lys-688 participates in a covalent cross-link: Glycyl lysine isopeptide (Lys-Gly) (interchain with G-Cter in ubiquitin). 2 positions are modified to phosphoserine: Ser-700 and Ser-712. Phosphothreonine is present on Thr-717. 6 positions are modified to phosphoserine: Ser-737, Ser-753, Ser-768, Ser-790, Ser-795, and Ser-813. Residues 859–879 (LIFVLIWCLVIFLAEVAASLV) traverse the membrane as a helical segment. One can recognise an ABC transmembrane type-1 2 domain in the interval 859 to 1155 (LIFVLIWCLV…AVNSSIDVDS (297 aa)). The Extracellular portion of the chain corresponds to 880 to 918 (LLWLLGNTRFQDKGNSTYSRNNSYAVIITNTSSYYVFYI). N-linked (GlcNAc...) asparagine glycosylation is found at Asn-894, Asn-900, and Asn-909. A discontinuously helical membrane pass occupies residues 919 to 939 (YVGVADTLLALGFFRGLPLVH). Topologically, residues 940–990 (TLITVSKILHHKMLHSVLQAPMSTLNTLKAGGILNRFSKDIAILDDLLPLT) are cytoplasmic. The helical transmembrane segment at 991-1011 (IFDFIQLLLIVIGAIAVVSVL) threads the bilayer. Over 1012–1013 (QP) the chain is Extracellular. Residues 1014–1034 (YIFLATVPVIAAFILLRAYFL) form a helical membrane-spanning segment. Over 1035–1095 (QTSQQLKQLE…TASWFLYLST (61 aa)) the chain is Cytoplasmic. The helical transmembrane segment at 1096 to 1116 (LRWFQMRIEMIFVIFFIAVTF) threads the bilayer. The Extracellular segment spans residues 1117–1130 (ISILTTGEGEGTVG). Residues 1131-1151 (IILTLAMNIMSTLQWAVNSSI) traverse the membrane as a helical segment. Residues 1152 to 1481 (DVDSLMRSVS…TEEEVQETRL (330 aa)) lie on the Cytoplasmic side of the membrane. Positions 1211–1444 (MTIKDLTAKY…KSLFRQAISH (234 aa)) constitute an ABC transporter 2 domain. Residues Tyr-1220 and 1245–1252 (GRTGSGKS) each bind ATP. Residues 1387–1481 (RALKQAFADC…TEEEVQETRL (95 aa)) are interaction with GORASP2. A lipid anchor (S-palmitoyl cysteine) is attached at Cys-1396. Residues Ser-1445 and Ser-1457 each carry the phosphoserine modification. Positions 1453–1481 (HRNSSKYKSRPQIASLKEETEEEVQETRL) are disordered. Acidic residues predominate over residues 1471-1481 (ETEEEVQETRL). Residues 1479 to 1481 (TRL) carry the PDZ-binding motif.

The protein belongs to the ABC transporter superfamily. ABCC family. CFTR transporter (TC 3.A.1.202) subfamily. Monomer; does not require oligomerization for channel activity. May form oligomers in the membrane. Interacts with SLC26A3, SLC26A6 and NHERF1. Interacts with SHANK2. Interacts with MYO6. Interacts (via C-terminus) with GOPC (via PDZ domain); this promotes CFTR internalization and thereby decreases channel activity. Interacts with SLC4A7 through NHERF1. Found in a complex with MYO5B and RAB11A. Interacts with ANO1. Interacts with SLC26A8. Interacts with AHCYL1; the interaction increases CFTR activity. Interacts with CSE1L. The core-glycosylated form interacts with GORASP2 (via PDZ GRASP-type 1 domain) in respone to ER stress. Interacts with MARCHF2; the interaction leads to CFTR ubiqtuitination and degradation. Interacts with ADGRG2. N-glycosylated. In terms of processing, phosphorylated; cAMP treatment promotes phosphorylation and activates the channel. Dephosphorylation decreases the ATPase activity (in vitro). Phosphorylation at PKA sites activates the channel. Phosphorylation at PKC sites enhances the response to phosphorylation by PKA. Phosphorylated by AMPK; this inhibits channel activity. Post-translationally, ubiquitinated, leading to its degradation in the lysosome. Deubiquitination by USP10 in early endosomes enhances its endocytic recycling to the cell membrane. Ubiquitinated by RNF185 during ER stress. Ubiquitinated by MARCHF2.

It is found in the apical cell membrane. Its subcellular location is the early endosome membrane. The protein resides in the cell membrane. It localises to the recycling endosome membrane. The protein localises to the endoplasmic reticulum membrane. It is found in the nucleus. The catalysed reaction is ATP + H2O + closed Cl(-) channel = ADP + phosphate + open Cl(-) channel.. The enzyme catalyses chloride(in) = chloride(out). It carries out the reaction hydrogencarbonate(in) = hydrogencarbonate(out). It catalyses the reaction ATP + H2O = ADP + phosphate + H(+). Its function is as follows. Epithelial ion channel that plays an important role in the regulation of epithelial ion and water transport and fluid homeostasis. Mediates the transport of chloride ions across the cell membrane. Possesses an intrinsic ATPase activity and utilizes ATP to gate its channel; the passive flow of anions through the channel is gated by cycles of ATP binding and hydrolysis by the ATP-binding domains. The ion channel is also permeable to HCO(3)(-); selectivity depends on the extracellular chloride concentration. Exerts its function also by modulating the activity of other ion channels and transporters. Contributes to the regulation of the pH and the ion content of the epithelial fluid layer. Modulates the activity of the epithelial sodium channel (ENaC) complex, in part by regulating the cell surface expression of the ENaC complex. May regulate bicarbonate secretion and salvage in epithelial cells by regulating the transporter SLC4A7. Can inhibit the chloride channel activity of ANO1. Plays a role in the chloride and bicarbonate homeostasis during sperm epididymal maturation and capacitation. This Saimiri boliviensis boliviensis (Bolivian squirrel monkey) protein is Cystic fibrosis transmembrane conductance regulator.